The primary structure comprises 301 residues: Probable enoyl-CoA hydratase 2, mitochondrial (301 aa).

The transit peptide at 1-32 directs the protein to the mitochondrion; that stretch reads MSFVKYLRRDNLLQLAGKPSLSRNYILQTCRT. Substrate contacts are provided by residues 105–109 and Gly152; that span reads AGADL.

Belongs to the enoyl-CoA hydratase/isomerase family.

The protein resides in the mitochondrion. It catalyses the reaction a (3S)-3-hydroxyacyl-CoA = a (2E)-enoyl-CoA + H2O. The catalysed reaction is a 4-saturated-(3S)-3-hydroxyacyl-CoA = a (3E)-enoyl-CoA + H2O. The protein operates within lipid metabolism; fatty acid beta-oxidation. Its function is as follows. Straight-chain enoyl-CoA thioesters from C4 up to at least C16 are processed, although with decreasing catalytic rate. In Arabidopsis thaliana (Mouse-ear cress), this protein is Probable enoyl-CoA hydratase 2, mitochondrial.